Here is a 147-residue protein sequence, read N- to C-terminus: RxLR effector protein Avr3a (147 aa).

An N-terminal signal peptide occupies residues 1–21; that stretch reads MRLAIMLSATAVAINFATSSA. The RxLR-dEER signature appears at 44-59; the sequence is RLLRKNEENEETSEER. At Lys48 the chain carries N6-acetyllysine. Residues 77–147 form an effector domain region; that stretch reads ALTERADAKK…YMMHLGLTGY (71 aa).

It belongs to the RxLR effector family. Forms homodimers via the RxLR-dEER motif. Interacts with host E3 ligase CMPG1. Interacts with host DRP2. Proteolytically cleaved. The cleavage site directly after the RxLR sequence and the high conservation among other effector proteins suggest that the RxLR motif might play a crucial role in the intracellular processing before secretion. In terms of processing, glycosylated. Post-translationally, N-acetylated at Lys-48 after cleavage.

It is found in the secreted. It localises to the host cytoplasm. Its function is as follows. Multifunctional effector that can suppress host BAK1/SERK3-mediated immunity through at least two different pathways. Manipulates plant immunity by targeting and stabilizing host E3 ligase CMPG1. Preventing the normal 26S proteasome-dependent degradation of potato CMPG1, and thus potentially of its protein substrates in the host cell, further abolishes host cell death during the biotrophic phase of infection. Also associates with and affects the function of the dynamin-related protein 2 (DRP2), a plant GTPase involved in immune receptor-mediated endocytosis. The Avr3a(EM) form evades recognition by R3a, thus does not trigger R3a-mediated hypersensitivity and does not suppress INF1-induced cell death. This Phytophthora infestans (Potato late blight agent) protein is RxLR effector protein Avr3a.